The sequence spans 229 residues: 2-C-methyl-D-erythritol 4-phosphate cytidylyltransferase (229 aa).

The protein belongs to the IspD/TarI cytidylyltransferase family. IspD subfamily.

The enzyme catalyses 2-C-methyl-D-erythritol 4-phosphate + CTP + H(+) = 4-CDP-2-C-methyl-D-erythritol + diphosphate. The protein operates within isoprenoid biosynthesis; isopentenyl diphosphate biosynthesis via DXP pathway; isopentenyl diphosphate from 1-deoxy-D-xylulose 5-phosphate: step 2/6. Catalyzes the formation of 4-diphosphocytidyl-2-C-methyl-D-erythritol from CTP and 2-C-methyl-D-erythritol 4-phosphate (MEP). This is 2-C-methyl-D-erythritol 4-phosphate cytidylyltransferase from Neisseria gonorrhoeae (strain NCCP11945).